A 161-amino-acid polypeptide reads, in one-letter code: Dehydrin DHN3 (161 aa).

The segment covering 1–12 (MEHGHATNRVDE) has biased composition (basic and acidic residues). The disordered stretch occupies residues 1 to 161 (MEHGHATNRV…KIKEKLPGQH (161 aa)). Gly residues predominate over residues 20–38 (HGVGTGMGAHGGVGTGAAA). Composition is skewed to low complexity over residues 93-107 (DQQQ…HGHT) and 115-130 (HGAT…QGHT). Repeat copies occupy residues 101–123 (YGQH…TGGT) and 124–144 (YGQQ…DGTG). The interval 101–144 (YGQHGHTGMTGTGEHGATATGGTYGQQGHTGMTGTGAHGTDGTG) is 2 X approximate tandem repeats. A compositionally biased stretch (gly residues) spans 131–142 (GMTGTGAHGTDG). The span at 143 to 161 (TGEKKGIMDKIKEKLPGQH) shows a compositional bias: basic and acidic residues.

The protein belongs to the plant dehydrin family.

In Hordeum vulgare (Barley), this protein is Dehydrin DHN3 (DHN3).